Reading from the N-terminus, the 312-residue chain is Isethionate sulfite-lyase activating enzyme (312 aa).

Positions 20–304 (HDGPGIRTIV…GLQKTALDIL (285 aa)) constitute a Radical SAM core domain. Positions 34, 38, 41, 60, 66, 69, 73, 93, 96, 100, and 104 each coordinate [4Fe-4S] cluster. 40–42 (WCS) is a binding site for S-adenosyl-L-methionine. 2 4Fe-4S ferredoxin-type domains span residues 51–83 (AELA…CGDD) and 84–115 (DKPR…YGKK). Residues G144, 193–195 (DIK), and H267 each bind S-adenosyl-L-methionine.

It belongs to the organic radical-activating enzymes family. As to quaternary structure, monomer. [4Fe-4S] cluster serves as cofactor.

The enzyme catalyses glycyl-[protein] + reduced [flavodoxin] + S-adenosyl-L-methionine = glycin-2-yl radical-[protein] + semiquinone [flavodoxin] + 5'-deoxyadenosine + L-methionine + H(+). It functions in the pathway organosulfur degradation; alkanesulfonate degradation. Functionally, involved in an anaerobic respiration pathway that converts the sulfonate isethionate (2-hydroxyethanesulfonate) to ammonia, acetate and sulfide. Catalyzes activation of the isethionate sulfite-lyase IslA under anaerobic conditions by generation of an organic free radical on a glycine residue, via a homolytic cleavage of S-adenosyl-L-methionine (SAM). In Desulfovibrio desulfuricans (strain ATCC 27774 / DSM 6949 / MB), this protein is Isethionate sulfite-lyase activating enzyme.